The sequence spans 459 residues: ATP synthase subunit beta (459 aa).

148 to 155 (GGAGVGKT) provides a ligand contact to ATP.

Belongs to the ATPase alpha/beta chains family. F-type ATPases have 2 components, CF(1) - the catalytic core - and CF(0) - the membrane proton channel. CF(1) has five subunits: alpha(3), beta(3), gamma(1), delta(1), epsilon(1). CF(0) has three main subunits: a(1), b(2) and c(9-12). The alpha and beta chains form an alternating ring which encloses part of the gamma chain. CF(1) is attached to CF(0) by a central stalk formed by the gamma and epsilon chains, while a peripheral stalk is formed by the delta and b chains.

It is found in the cell inner membrane. The catalysed reaction is ATP + H2O + 4 H(+)(in) = ADP + phosphate + 5 H(+)(out). In terms of biological role, produces ATP from ADP in the presence of a proton gradient across the membrane. The catalytic sites are hosted primarily by the beta subunits. This is ATP synthase subunit beta from Burkholderia mallei (strain NCTC 10229).